Consider the following 119-residue polypeptide: Protein TusC (119 aa).

Belongs to the DsrF/TusC family. Heterohexamer, formed by a dimer of trimers. The hexameric TusBCD complex contains 2 copies each of TusB, TusC and TusD. The TusBCD complex interacts with TusE.

The protein resides in the cytoplasm. Its function is as follows. Part of a sulfur-relay system required for 2-thiolation of 5-methylaminomethyl-2-thiouridine (mnm(5)s(2)U) at tRNA wobble positions. In Cronobacter sakazakii (strain ATCC BAA-894) (Enterobacter sakazakii), this protein is Protein TusC.